The chain runs to 98 residues: uncharacterized protein (98 aa).

This sequence belongs to the HesB/IscA family.

This is an uncharacterized protein from Staphylococcus saprophyticus subsp. saprophyticus (strain ATCC 15305 / DSM 20229 / NCIMB 8711 / NCTC 7292 / S-41).